The sequence spans 421 residues: Forkhead box protein fkh-4 (421 aa).

Residues 118-218 (RPPISYVALC…SDADFDFFRK (101 aa)) constitute a DNA-binding region (fork-head).

It is found in the nucleus. In terms of biological role, transcription factor. Regulates expression of a class of small RNAs, known as 21U-RNAs, perhaps acting redundantly with fkh-3 and fkh-5. This is Forkhead box protein fkh-4 from Caenorhabditis elegans.